The following is a 136-amino-acid chain: Nucleoside diphosphate kinase (136 aa).

6 residues coordinate ATP: K10, F58, R86, T92, R104, and N114. H117 functions as the Pros-phosphohistidine intermediate in the catalytic mechanism.

The protein belongs to the NDK family. In terms of assembly, homotetramer. Mg(2+) serves as cofactor.

It is found in the cytoplasm. The enzyme catalyses a 2'-deoxyribonucleoside 5'-diphosphate + ATP = a 2'-deoxyribonucleoside 5'-triphosphate + ADP. It carries out the reaction a ribonucleoside 5'-diphosphate + ATP = a ribonucleoside 5'-triphosphate + ADP. Functionally, major role in the synthesis of nucleoside triphosphates other than ATP. The ATP gamma phosphate is transferred to the NDP beta phosphate via a ping-pong mechanism, using a phosphorylated active-site intermediate. The chain is Nucleoside diphosphate kinase from Corynebacterium diphtheriae (strain ATCC 700971 / NCTC 13129 / Biotype gravis).